The chain runs to 152 residues: Xanthine-guanine phosphoribosyltransferase (152 aa).

Residues 37–38 (RG), Arg69, and 88–96 (DDLVDTGGT) contribute to the 5-phospho-alpha-D-ribose 1-diphosphate site. GMP is bound at residue Arg69. Asp89 provides a ligand contact to Mg(2+). 2 residues coordinate guanine: Asp92 and Ile135. Positions 92 and 135 each coordinate xanthine. GMP is bound by residues 92–96 (DTGGT) and 134–135 (WI).

Belongs to the purine/pyrimidine phosphoribosyltransferase family. XGPT subfamily. Homotetramer. The cofactor is Mg(2+).

It localises to the cell inner membrane. The catalysed reaction is GMP + diphosphate = guanine + 5-phospho-alpha-D-ribose 1-diphosphate. The enzyme catalyses XMP + diphosphate = xanthine + 5-phospho-alpha-D-ribose 1-diphosphate. It catalyses the reaction IMP + diphosphate = hypoxanthine + 5-phospho-alpha-D-ribose 1-diphosphate. It participates in purine metabolism; GMP biosynthesis via salvage pathway; GMP from guanine: step 1/1. Its pathway is purine metabolism; XMP biosynthesis via salvage pathway; XMP from xanthine: step 1/1. Purine salvage pathway enzyme that catalyzes the transfer of the ribosyl-5-phosphate group from 5-phospho-alpha-D-ribose 1-diphosphate (PRPP) to the N9 position of the 6-oxopurines guanine and xanthine to form the corresponding ribonucleotides GMP (guanosine 5'-monophosphate) and XMP (xanthosine 5'-monophosphate), with the release of PPi. To a lesser extent, also acts on hypoxanthine. The protein is Xanthine-guanine phosphoribosyltransferase of Escherichia coli (strain UTI89 / UPEC).